The primary structure comprises 379 residues: Synaptic vesicle membrane protein VAT-1 (379 aa).

A Phosphoserine modification is found at Ser-273.

This sequence belongs to the zinc-containing alcohol dehydrogenase family. Quinone oxidoreductase subfamily. Cholinergic synaptic vesicles.

It localises to the cytoplasmic vesicle. Its subcellular location is the secretory vesicle. It is found in the synaptic vesicle membrane. In terms of biological role, may play a central role in the functions mediated by specific classes of synaptic vesicles. The sequence is that of Synaptic vesicle membrane protein VAT-1 from Tetronarce californica (Pacific electric ray).